The primary structure comprises 245 residues: uncharacterized protein (245 aa).

The HTH gntR-type domain maps to 29 to 96 (RSLIEATFQR…AQRGFHVTPM (68 aa)). Residues 56 to 75 (IEDLKSRYEVSGGTVREALS) constitute a DNA-binding region (H-T-H motif).

This is an uncharacterized protein from Paraburkholderia xenovorans (strain LB400).